The following is a 568-amino-acid chain: Proline--tRNA ligase (568 aa).

Belongs to the class-II aminoacyl-tRNA synthetase family. ProS type 1 subfamily. In terms of assembly, homodimer.

The protein resides in the cytoplasm. It carries out the reaction tRNA(Pro) + L-proline + ATP = L-prolyl-tRNA(Pro) + AMP + diphosphate. Its function is as follows. Catalyzes the attachment of proline to tRNA(Pro) in a two-step reaction: proline is first activated by ATP to form Pro-AMP and then transferred to the acceptor end of tRNA(Pro). As ProRS can inadvertently accommodate and process non-cognate amino acids such as alanine and cysteine, to avoid such errors it has two additional distinct editing activities against alanine. One activity is designated as 'pretransfer' editing and involves the tRNA(Pro)-independent hydrolysis of activated Ala-AMP. The other activity is designated 'posttransfer' editing and involves deacylation of mischarged Ala-tRNA(Pro). The misacylated Cys-tRNA(Pro) is not edited by ProRS. This chain is Proline--tRNA ligase, found in Listeria monocytogenes serotype 4b (strain F2365).